The primary structure comprises 401 residues: GRIP domain-containing protein C119.12 (401 aa).

A coiled-coil region spans residues 7 to 296 (NETKLVENEN…TLLIGKLQHE (290 aa)). A GRIP domain is found at 315–366 (NNAEKIDKQLISNLFVSFLTLPRADTKRFEILQLISSVLDWNDTQREQTGLQ).

The protein resides in the golgi apparatus lumen. The polypeptide is GRIP domain-containing protein C119.12 (Schizosaccharomyces pombe (strain 972 / ATCC 24843) (Fission yeast)).